The primary structure comprises 359 residues: tRNA N6-adenosine threonylcarbamoyltransferase (359 aa).

The Fe cation site is built by H115 and H119. Substrate-binding positions include L137–G141, D170, G183, and N283. Fe cation is bound at residue D311. Residues A328 to A359 are disordered.

The protein belongs to the KAE1 / TsaD family. The cofactor is Fe(2+).

It is found in the cytoplasm. The enzyme catalyses L-threonylcarbamoyladenylate + adenosine(37) in tRNA = N(6)-L-threonylcarbamoyladenosine(37) in tRNA + AMP + H(+). Its function is as follows. Required for the formation of a threonylcarbamoyl group on adenosine at position 37 (t(6)A37) in tRNAs that read codons beginning with adenine. Is involved in the transfer of the threonylcarbamoyl moiety of threonylcarbamoyl-AMP (TC-AMP) to the N6 group of A37, together with TsaE and TsaB. TsaD likely plays a direct catalytic role in this reaction. This chain is tRNA N6-adenosine threonylcarbamoyltransferase, found in Brucella melitensis biotype 2 (strain ATCC 23457).